We begin with the raw amino-acid sequence, 440 residues long: Adenylosuccinate lyase (440 aa).

N(6)-(1,2-dicarboxyethyl)-AMP-binding positions include 4–5, 67–69, and 93–94; these read RY, KHD, and TS. H141 acts as the Proton donor/acceptor in catalysis. Q212 contributes to the N(6)-(1,2-dicarboxyethyl)-AMP binding site. Catalysis depends on S262, which acts as the Proton donor/acceptor. N(6)-(1,2-dicarboxyethyl)-AMP contacts are provided by residues S263, 268–270, N276, and 307–311; these read KRN and SVERF.

Belongs to the lyase 1 family. Adenylosuccinate lyase subfamily. In terms of assembly, homotetramer. Residues from neighboring subunits contribute catalytic and substrate-binding residues to each active site.

It carries out the reaction N(6)-(1,2-dicarboxyethyl)-AMP = fumarate + AMP. It catalyses the reaction (2S)-2-[5-amino-1-(5-phospho-beta-D-ribosyl)imidazole-4-carboxamido]succinate = 5-amino-1-(5-phospho-beta-D-ribosyl)imidazole-4-carboxamide + fumarate. It functions in the pathway purine metabolism; AMP biosynthesis via de novo pathway; AMP from IMP: step 2/2. The protein operates within purine metabolism; IMP biosynthesis via de novo pathway; 5-amino-1-(5-phospho-D-ribosyl)imidazole-4-carboxamide from 5-amino-1-(5-phospho-D-ribosyl)imidazole-4-carboxylate: step 2/2. Catalyzes two reactions in de novo purine nucleotide biosynthesis. Catalyzes the breakdown of 5-aminoimidazole- (N-succinylocarboxamide) ribotide (SAICAR or 2-[5-amino-1-(5-phospho-beta-D-ribosyl)imidazole-4-carboxamido]succinate) to 5-aminoimidazole-4-carboxamide ribotide (AICAR or 5-amino-1-(5-phospho-beta-D-ribosyl)imidazole-4-carboxamide) and fumarate, and of adenylosuccinate (ADS or N(6)-(1,2-dicarboxyethyl)-AMP) to adenosine monophosphate (AMP) and fumarate. The chain is Adenylosuccinate lyase (purB) from Helicobacter pylori (strain J99 / ATCC 700824) (Campylobacter pylori J99).